The chain runs to 382 residues: Apolipoprotein A-IV (382 aa).

A signal peptide spans 1 to 20; the sequence is MFLKAVVLTLSLVAVTGAQA. Tandem repeats lie at residues 33–54, 60–81, 82–103, 115–136, 137–158, 159–180, 181–202, 203–224, 225–246, 247–268, 269–286, 287–308, and 309–330. The interval 33-330 is 13 X 22 AA approximate tandem repeats; the sequence is DYFSQLSNNA…QVEELRQKLG (298 aa).

Belongs to the apolipoprotein A1/A4/E family. In terms of assembly, homodimer. Phosphorylation sites are present in the extracellular medium.

Its subcellular location is the secreted. In terms of biological role, may have a role in chylomicrons and VLDL secretion and catabolism. Required for efficient activation of lipoprotein lipase by ApoC-II; potent activator of LCAT. Apoa-IV is a major component of HDL and chylomicrons. This is Apolipoprotein A-IV (APOA4) from Neomonachus schauinslandi (Hawaiian monk seal).